A 1129-amino-acid polypeptide reads, in one-letter code: DNA-directed RNA polymerase I subunit RPA2 (1129 aa).

Residues 1061–1093 (CHKCGSILAPLQRIVKRNETGGLSSQPDTCRLC) form a C4-type zinc finger.

Belongs to the RNA polymerase beta chain family. In terms of assembly, component of the RNA polymerase I (Pol I) complex consisting of at least 13 subunits.

The protein resides in the nucleus. It localises to the nucleolus. The enzyme catalyses RNA(n) + a ribonucleoside 5'-triphosphate = RNA(n+1) + diphosphate. Functionally, DNA-dependent RNA polymerase catalyzes the transcription of DNA into RNA using the four ribonucleoside triphosphates as substrates. Second largest core component of RNA polymerase I which synthesizes ribosomal RNA precursors. Proposed to contribute to the polymerase catalytic activity and forms the polymerase active center together with the largest subunit. Pol I is composed of mobile elements and RPA2 is part of the core element with the central large cleft and probably a clamp element that moves to open and close the cleft. In Drosophila melanogaster (Fruit fly), this protein is DNA-directed RNA polymerase I subunit RPA2.